The sequence spans 412 residues: Transcription factor NIGT1 (412 aa).

3 disordered regions span residues 54–241 (MDAA…RCWA), 286–310 (KYRL…PAPP), and 358–412 (AMLP…TTSA). Basic and acidic residues predominate over residues 90–112 (ESTHADAAKSGKKEEAETSERHS). Positions 183 to 193 (ASSTTAAASST) are enriched in low complexity. Positions 198-228 (SGDKPTDDDTEKHMETDKDNDKDAKDKDKEG) are enriched in basic and acidic residues. In terms of domain architecture, HTH myb-type spans 232–292 (PHRKPRRCWA…HLQKYRLHTR (61 aa)). The H-T-H motif DNA-binding region spans 263–288 (PKQIRELMKVDGLTNDEVKSHLQKYR). Residues 383-392 (SGSEGRRSGD) are compositionally biased toward basic and acidic residues. Over residues 395 to 412 (DGSSSSPAVSSSSQTTSA) the composition is skewed to low complexity.

The protein localises to the nucleus. Its function is as follows. Transcriptional repressor that may play a role in response to nitrogen. May be involved in a time-dependent signaling for transcriptional regulation of nitrate-responsive genes. Binds specifically to the DNA sequence motif 5'-GAATC-3' or 5'-GAATATTC-3'. Represses the activity of its own promoter trough binding to these motifs. This Oryza sativa subsp. japonica (Rice) protein is Transcription factor NIGT1.